The sequence spans 245 residues: Ribosome maturation factor RimP (245 aa).

This sequence belongs to the RimP family.

The protein localises to the cytoplasm. Its function is as follows. Required for maturation of 30S ribosomal subunits. In Verminephrobacter eiseniae (strain EF01-2), this protein is Ribosome maturation factor RimP.